We begin with the raw amino-acid sequence, 153 residues long: Endoribonuclease YbeY (153 aa).

3 residues coordinate Zn(2+): histidine 113, histidine 117, and histidine 123.

Belongs to the endoribonuclease YbeY family. Requires Zn(2+) as cofactor.

It is found in the cytoplasm. Single strand-specific metallo-endoribonuclease involved in late-stage 70S ribosome quality control and in maturation of the 3' terminus of the 16S rRNA. The polypeptide is Endoribonuclease YbeY (Aliivibrio fischeri (strain MJ11) (Vibrio fischeri)).